The sequence spans 602 residues: UPF0329 protein ECU02_0060 (602 aa).

A compositionally biased stretch (basic and acidic residues) spans 313-345 (EEDERKRAEAESARNREELLRMEEREKGKEKGS). The disordered stretch occupies residues 313–407 (EEDERKRAEA…SPKEESKGEE (95 aa)). The segment covering 346 to 356 (KGKGRKKRGKK) has biased composition (basic residues). Positions 357–369 (GAGEAKEESKEED) are enriched in basic and acidic residues. Residues 370–384 (RGGEEEESVEADVPV) show a composition bias toward acidic residues.

It belongs to the UPF0329 family.

The protein is UPF0329 protein ECU02_0060 of Encephalitozoon cuniculi (strain GB-M1) (Microsporidian parasite).